The primary structure comprises 220 residues: Fructose-6-phosphate aldolase (220 aa).

Lys-85 (schiff-base intermediate with substrate) is an active-site residue.

The protein belongs to the transaldolase family. Type 3A subfamily. As to quaternary structure, homodecamer.

It localises to the cytoplasm. The catalysed reaction is beta-D-fructose 6-phosphate = dihydroxyacetone + D-glyceraldehyde 3-phosphate. Its function is as follows. Catalyzes the reversible formation of fructose 6-phosphate from dihydroxyacetone and D-glyceraldehyde 3-phosphate via an aldolization reaction. The sequence is that of Fructose-6-phosphate aldolase from Salmonella heidelberg (strain SL476).